We begin with the raw amino-acid sequence, 311 residues long: Urease accessory protein UreD 2 (311 aa).

Belongs to the UreD family. As to quaternary structure, ureD, UreF and UreG form a complex that acts as a GTP-hydrolysis-dependent molecular chaperone, activating the urease apoprotein by helping to assemble the nickel containing metallocenter of UreC. The UreE protein probably delivers the nickel.

The protein localises to the cytoplasm. In terms of biological role, required for maturation of urease via the functional incorporation of the urease nickel metallocenter. This chain is Urease accessory protein UreD 2, found in Methylorubrum extorquens (strain PA1) (Methylobacterium extorquens).